We begin with the raw amino-acid sequence, 627 residues long: 1-deoxy-D-xylulose-5-phosphate synthase (627 aa).

Thiamine diphosphate contacts are provided by residues His-72 and 113–115; that span reads GHS. Position 144 (Asp-144) interacts with Mg(2+). Thiamine diphosphate is bound by residues 145–146, Asn-173, Tyr-283, and Glu-366; that span reads GA. Asn-173 provides a ligand contact to Mg(2+).

This sequence belongs to the transketolase family. DXPS subfamily. As to quaternary structure, homodimer. Requires Mg(2+) as cofactor. Thiamine diphosphate serves as cofactor.

The catalysed reaction is D-glyceraldehyde 3-phosphate + pyruvate + H(+) = 1-deoxy-D-xylulose 5-phosphate + CO2. Its pathway is metabolic intermediate biosynthesis; 1-deoxy-D-xylulose 5-phosphate biosynthesis; 1-deoxy-D-xylulose 5-phosphate from D-glyceraldehyde 3-phosphate and pyruvate: step 1/1. Its function is as follows. Catalyzes the acyloin condensation reaction between C atoms 2 and 3 of pyruvate and glyceraldehyde 3-phosphate to yield 1-deoxy-D-xylulose-5-phosphate (DXP). This Macrococcus caseolyticus (strain JCSC5402) (Macrococcoides caseolyticum) protein is 1-deoxy-D-xylulose-5-phosphate synthase.